Consider the following 494-residue polypeptide: uncharacterized protein (494 aa).

This is an uncharacterized protein from Acanthamoeba polyphaga (Amoeba).